The sequence spans 790 residues: Probable phosphoketolase (790 aa).

This sequence belongs to the XFP family. Thiamine diphosphate serves as cofactor.

This chain is Probable phosphoketolase, found in Nitrosomonas europaea (strain ATCC 19718 / CIP 103999 / KCTC 2705 / NBRC 14298).